Reading from the N-terminus, the 304-residue chain is bZIP transcription factor 50 (304 aa).

Topologically, residues 1–222 (MDVEFFADLD…MQESAVLTET (222 aa)) are cytoplasmic. Disordered regions lie at residues 26–60 (GSGV…SREA) and 94–163 (GEEE…ERKK). Low complexity predominate over residues 45–59 (SPESVSSRRPSPSRE). The span at 127–139 (EKEDVEAEVDGDD) shows a compositional bias: acidic residues. The bZIP domain occupies 141 to 203 (MSKKKRRQMR…NMALRQSLLK (63 aa)). The segment at 143 to 167 (KKKRRQMRNRDSAMKSRERKKMYVK) is basic motif. The segment covering 150-163 (RNRDSAMKSRERKK) has biased composition (basic and acidic residues). A leucine-zipper region spans residues 169–183 (LETKSKYLEAECRRL). The helical transmembrane segment at 223 to 243 (LPLVSLLWLVSIVCLLPVPGL) threads the bilayer. The Lumenal portion of the chain corresponds to 244-304 (PNRNPVARSS…GPFRLAAAAC (61 aa)).

The protein belongs to the bZIP family.

Its subcellular location is the endoplasmic reticulum membrane. It is found in the nucleus. With respect to regulation, transcriptionally activated by IRE1 in response to endoplasmic reticulum (ER) stress. IRE1 cleaves a 20-bp fragment causing a frameshift of the mRNA transcript, leading to a nuclear isoform of the BZIP50 activator. Its function is as follows. Transcription factor involved in endoplasmic reticulum (ER) stress response. Acts downstream of the ER stress sensors IRE1, BZIP39 and BZIP60 to activate BiP chaperone genes. The sequence is that of bZIP transcription factor 50 from Oryza sativa subsp. japonica (Rice).